The following is an 89-amino-acid chain: Putative regulatory protein MAE_11840 (89 aa).

It belongs to the RemA family.

In Microcystis aeruginosa (strain NIES-843 / IAM M-2473), this protein is Putative regulatory protein MAE_11840.